The primary structure comprises 1339 residues: Receptor tyrosine-protein kinase erbB-3 (1339 aa).

The signal sequence occupies residues 1 to 19 (MRATGTLQVLCFLLSLARG). The Extracellular segment spans residues 20–643 (SEMGNSQAVC…EVLMSKPHLV (624 aa)). An N-linked (GlcNAc...) asparagine glycan is attached at Asn-126. Cystine bridges form between Cys-186-Cys-194, Cys-190-Cys-202, Cys-210-Cys-218, Cys-214-Cys-226, Cys-227-Cys-235, Cys-231-Cys-243, Cys-246-Cys-255, Cys-259-Cys-286, Cys-290-Cys-301, Cys-305-Cys-320, and Cys-323-Cys-327. A glycan (N-linked (GlcNAc...) asparagine) is linked at Asn-250. 5 N-linked (GlcNAc...) asparagine glycosylation sites follow: Asn-353, Asn-408, Asn-414, Asn-437, and Asn-469. Disulfide bonds link Cys-500-Cys-509, Cys-504-Cys-517, Cys-520-Cys-529, Cys-533-Cys-549, Cys-552-Cys-565, Cys-556-Cys-573, Cys-576-Cys-585, Cys-589-Cys-610, Cys-613-Cys-621, and Cys-617-Cys-629. A glycan (N-linked (GlcNAc...) asparagine) is linked at Asn-522. The N-linked (GlcNAc...) asparagine glycan is linked to Asn-566. The N-linked (GlcNAc...) asparagine glycan is linked to Asn-616. A helical transmembrane segment spans residues 644 to 662 (IAVTVGLAVILMILGGSFL). Residues 663–1339 (YWRGRRIQNK…LFPKANAQRT (677 aa)) are Cytoplasmic-facing. Ser-684 carries the phosphoserine modification. The Protein kinase domain maps to 707-964 (LRKLKVLGSG…TFKELANEFT (258 aa)). Residues 713–721 (LGSGVFGTV), Lys-740, 786–788 (QYL), and 832–837 (DLALRN) each bind ATP. Asp-832 acts as the Proton acceptor in catalysis. The residue at position 980 (Ser-980) is a Phosphoserine. Over residues 1023 to 1036 (SLGSALSLPTGTLT) the composition is skewed to low complexity. Disordered regions lie at residues 1023–1052 (SLGSALSLPTGTLTRPRGSQSLLSPSSGYM) and 1078–1215 (PISL…GSLE). Residues 1039–1052 (RGSQSLLSPSSGYM) show a composition bias toward polar residues. Positions 1172 to 1184 (GTLSSVGLSSVLG) are enriched in low complexity. Positions 1185 to 1195 (TEEEDEDEEYE) are enriched in acidic residues.

The protein belongs to the protein kinase superfamily. Tyr protein kinase family. EGF receptor subfamily. As to quaternary structure, monomer and homodimer. Heterodimer with each of the other ERBB receptors (Potential). Interacts with CSPG5, PA2G4, GRB7, MYOC and MUC1. Found in a ternary complex with NRG1 and ITGAV:ITGB3 or ITGA6:ITGB4. In terms of processing, autophosphorylated. Ligand-binding increases phosphorylation on tyrosine residues and promotes its association with the p85 subunit of phosphatidylinositol 3-kinase.

It localises to the membrane. The enzyme catalyses L-tyrosyl-[protein] + ATP = O-phospho-L-tyrosyl-[protein] + ADP + H(+). Its function is as follows. Tyrosine-protein kinase that plays an essential role as cell surface receptor for neuregulins. Binds to neuregulin-1 (NRG1) and is activated by it; ligand-binding increases phosphorylation on tyrosine residues and promotes its association with the p85 subunit of phosphatidylinositol 3-kinase. May also be activated by CSPG5. Involved in the regulation of myeloid cell differentiation. The sequence is that of Receptor tyrosine-protein kinase erbB-3 (Erbb3) from Rattus norvegicus (Rat).